The following is a 906-amino-acid chain: Ankyrin repeat and MYND domain-containing protein 1 (906 aa).

MORN repeat units lie at residues 16-38, 39-59, and 61-83; these read YHGQ…DGSS, FTGT…TKTM, and FQGL…DGSQ. Residues 282–311 form an ANK 1 repeat; that stretch reads KGYTVLAAAAMHSHLDIVNLLLDFGADVNK. A compositionally biased stretch (polar residues) spans 391–400; it reads SMQTPESSNM. Positions 391–411 are disordered; it reads SMQTPESSNMLHKEEVSPVKT. 6 ANK repeats span residues 479-508, 511-540, 547-579, 623-657, 660-689, and 701-732; these read VRKM…DPNL, VPMQ…QTDI, QSLT…NVDA, GGRT…NPNV, SGHS…DPNL, and VVCD…DVLN. Residues Cys-845, Cys-848, Cys-859, Cys-862, Cys-868, Cys-872, His-881, and Cys-885 each coordinate Zn(2+). The segment at 845-885 adopts an MYND-type zinc-finger fold; it reads CYQCGRSIGVRLSPCPRCYGILTCSKYCKTKAWIEFHKKDC.

The sequence is that of Ankyrin repeat and MYND domain-containing protein 1 (Ankmy1) from Mus musculus (Mouse).